Reading from the N-terminus, the 155-residue chain is Fibroblast growth factor 2 (155 aa).

Positions 1–9 (MAAGSITTL) are excised as a propeptide. Positions 1–20 (MAAGSITTLPALPEDGGSSA) are disordered. Asn-36 serves as a coordination point for heparin. Positions 46–48 (DGR) match the Cell attachment site; atypical motif. Tyr-82 is modified (phosphotyrosine; by TEC). The Cell attachment site; atypical motif lies at 88–90 (DGR). A Glycyl lysine isopeptide (Lys-Gly) (interchain with G-Cter in SUMO1) cross-link involves residue Lys-95. A heparin-binding region spans residues 128–144 (KRTGQYKLGPKTGPGQK).

Belongs to the heparin-binding growth factors family. In terms of assembly, monomer. Homodimer. Interacts with FGFR1, FGFR2, FGFR3 and FGFR4. Affinity between fibroblast growth factors (FGFs) and their receptors is increased by heparan sulfate glycosaminoglycans that function as coreceptors. Interacts with CSPG4, FGFBP1 and TEC. Found in a complex with FGFBP1, FGF1 and FGF2. Interacts with FGFBP3. Interacts with integrin ITGAV:ITGB3; the interaction is required for FGF2 signaling. Interacts with SNORC (via the extracellular domain). Interacts with glypican GPC3. In terms of processing, phosphorylation at Tyr-82 regulates FGF2 unconventional secretion.

The protein localises to the secreted. The protein resides in the nucleus. Acts as a ligand for FGFR1, FGFR2, FGFR3 and FGFR4. Also acts as an integrin ligand which is required for FGF2 signaling. Binds to integrin ITGAV:ITGB3. Plays an important role in the regulation of cell survival, cell division, cell differentiation and cell migration. Functions as a potent mitogen in vitro. Can induce angiogenesis. Mediates phosphorylation of ERK1/2 and thereby promotes retinal lens fiber differentiation. The chain is Fibroblast growth factor 2 (FGF2) from Ovis aries (Sheep).